We begin with the raw amino-acid sequence, 117 residues long: Acrylate reductase cytochrome subunit (117 aa).

Positions M1–A22 are cleaved as a signal peptide. The heme c site is built by H29, C37, C40, H41, C54, C57, H58, H79, H83, C90, C93, H94, H97, C104, C107, and H108.

The ArdAB flavocytochrome c is composed of a FAD-containing subunit (ArdA) and a heme c-containing subunit (ArdB). Heme c is required as a cofactor.

It localises to the periplasm. Its activity is regulated as follows. Methacrylate acts as a competitive inhibitor of the acrylate reductase activity and suppresses the reductase activity in dose-dependent manner. Its function is as follows. Heme c-containing subunit of the ArdAB flavocytochrome c, which catalyzes the reduction of acrylate to propanoate and supports dimethylsulfoniopropionate-dependent anaerobic respiration. In vitro, can use the artificial electron donor methyl viologen. The natural electron donor is probably a low-potential cytochrome c. Also shows weak activity toward methacrylate in vitro (at a 22-fold lower rate) but cannot use other tested 2-enoates, including crotonic, fumaric, sorbic, urocanic, cinnamic, p-coumaric, caffeic or ferulic acids. The protein catalyzes a unidirectional reaction and cannot oxidize propanoate with phenazine metasulfate and dichlorophenolindophenol as electron acceptors. The protein is Acrylate reductase cytochrome subunit of Shewanella woodyi (strain ATCC 51908 / MS32).